Consider the following 115-residue polypeptide: Probable 4-amino-4-deoxy-L-arabinose-phosphoundecaprenol flippase subunit ArnE (115 aa).

3 helical membrane-spanning segments follow: residues Pro42–Leu62, Val65–Ala85, and Val93–Gly112. Positions Leu46–Arg113 constitute an EamA domain.

Belongs to the ArnE family. In terms of assembly, heterodimer of ArnE and ArnF.

The protein localises to the cell inner membrane. It participates in bacterial outer membrane biogenesis; lipopolysaccharide biosynthesis. In terms of biological role, translocates 4-amino-4-deoxy-L-arabinose-phosphoundecaprenol (alpha-L-Ara4N-phosphoundecaprenol) from the cytoplasmic to the periplasmic side of the inner membrane. This is Probable 4-amino-4-deoxy-L-arabinose-phosphoundecaprenol flippase subunit ArnE from Pseudomonas aeruginosa (strain UCBPP-PA14).